We begin with the raw amino-acid sequence, 66 residues long: uncharacterized protein (66 aa).

This is an uncharacterized protein from Enterobacteria phage T4 (Bacteriophage T4).